A 704-amino-acid chain; its full sequence is Acetate--CoA ligase [ADP-forming] (704 aa).

In the N-terminal section; belongs to the acetate CoA ligase alpha subunit family. This sequence in the C-terminal section; belongs to the acetate CoA ligase beta subunit family. As to quaternary structure, homodimer.

It catalyses the reaction acetate + ATP + CoA = acetyl-CoA + ADP + phosphate. Functionally, catalyzes the formation of acetate and ATP from acetyl-CoA by using ADP and phosphate. Can also use butyryl-CoA, but not phenylacetyl-CoA. Cannot catalyze the reverse reaction. This chain is Acetate--CoA ligase [ADP-forming], found in Methanocaldococcus jannaschii (strain ATCC 43067 / DSM 2661 / JAL-1 / JCM 10045 / NBRC 100440) (Methanococcus jannaschii).